The chain runs to 535 residues: CTP synthase (535 aa).

The tract at residues 1–268 (MSTKYIFVTG…DQIVCDHLKL (268 aa)) is amidoligase domain. Residue Ser14 participates in CTP binding. Position 14 (Ser14) interacts with UTP. Position 15-20 (15-20 (SIGKGI)) interacts with ATP. Position 55 (Tyr55) interacts with L-glutamine. Asp72 contributes to the ATP binding site. Residues Asp72 and Glu142 each contribute to the Mg(2+) site. CTP-binding positions include 149-151 (DIE), 189-194 (KTKPTQ), and Lys225. Residues 189–194 (KTKPTQ) and Lys225 contribute to the UTP site. In terms of domain architecture, Glutamine amidotransferase type-1 spans 293–535 (KISLVGKYVE…FVTAAVENSN (243 aa)). Residue Gly355 coordinates L-glutamine. Cys382 (nucleophile; for glutamine hydrolysis) is an active-site residue. L-glutamine is bound by residues 383–386 (LGMQ), Glu406, and Arg464. Active-site residues include His509 and Glu511.

Belongs to the CTP synthase family. As to quaternary structure, homotetramer.

The catalysed reaction is UTP + L-glutamine + ATP + H2O = CTP + L-glutamate + ADP + phosphate + 2 H(+). It catalyses the reaction L-glutamine + H2O = L-glutamate + NH4(+). The enzyme catalyses UTP + NH4(+) + ATP = CTP + ADP + phosphate + 2 H(+). It functions in the pathway pyrimidine metabolism; CTP biosynthesis via de novo pathway; CTP from UDP: step 2/2. With respect to regulation, allosterically activated by GTP, when glutamine is the substrate; GTP has no effect on the reaction when ammonia is the substrate. The allosteric effector GTP functions by stabilizing the protein conformation that binds the tetrahedral intermediate(s) formed during glutamine hydrolysis. Inhibited by the product CTP, via allosteric rather than competitive inhibition. Its function is as follows. Catalyzes the ATP-dependent amination of UTP to CTP with either L-glutamine or ammonia as the source of nitrogen. Regulates intracellular CTP levels through interactions with the four ribonucleotide triphosphates. This chain is CTP synthase, found in Streptococcus pneumoniae (strain ATCC BAA-255 / R6).